We begin with the raw amino-acid sequence, 171 residues long: Probable deoxyuridine 5'-triphosphate nucleotidohydrolase (171 aa).

Belongs to the dCTP deaminase family. Archaeal dUTPase subfamily.

The enzyme catalyses dUTP + H2O = dUMP + diphosphate + H(+). It functions in the pathway pyrimidine metabolism; dUMP biosynthesis; dUMP from dCTP (dUTP route): step 2/2. Its function is as follows. This enzyme is involved in nucleotide metabolism: it produces dUMP, the immediate precursor of thymidine nucleotides and it decreases the intracellular concentration of dUTP so that uracil cannot be incorporated into DNA. In Methanosarcina acetivorans (strain ATCC 35395 / DSM 2834 / JCM 12185 / C2A), this protein is Probable deoxyuridine 5'-triphosphate nucleotidohydrolase.